The primary structure comprises 640 residues: Calpain-5 (640 aa).

A Calpain catalytic domain is found at 26–343 (LFEDPHFPAS…FTDIIKCRLI (318 aa)). Active-site residues include Cys-81, His-252, and Asn-284. A domain III region spans residues 344 to 496 (NTSYLSIHKT…VFTDVPSNCR (153 aa)). Residues 499–617 (RLDEPPRTCW…HSLHLQDRSG (119 aa)) enclose the C2 domain.

This sequence belongs to the peptidase C2 family.

Functionally, calcium-regulated non-lysosomal thiol-protease. This is Calpain-5 (Capn5) from Rattus norvegicus (Rat).